Reading from the N-terminus, the 179-residue chain is Sec-independent protein translocase protein TatB (179 aa).

A helical membrane pass occupies residues 1-21 (MLDLGLSKMALIGVVALVVLG). The segment covering 101-115 (GAAGDAGSVGSPGSD) has biased composition (low complexity). The interval 101–134 (GAAGDAGSVGSPGSDTPAAPSWRGSSAALAPKRR) is disordered.

Belongs to the TatB family. In terms of assembly, the Tat system comprises two distinct complexes: a TatABC complex, containing multiple copies of TatA, TatB and TatC subunits, and a separate TatA complex, containing only TatA subunits. Substrates initially bind to the TatABC complex, which probably triggers association of the separate TatA complex to form the active translocon.

It localises to the cell inner membrane. Part of the twin-arginine translocation (Tat) system that transports large folded proteins containing a characteristic twin-arginine motif in their signal peptide across membranes. Together with TatC, TatB is part of a receptor directly interacting with Tat signal peptides. TatB may form an oligomeric binding site that transiently accommodates folded Tat precursor proteins before their translocation. This Burkholderia orbicola (strain AU 1054) protein is Sec-independent protein translocase protein TatB.